The following is a 505-amino-acid chain: Deoxyguanosinetriphosphate triphosphohydrolase (505 aa).

In terms of domain architecture, HD spans 66 to 273 (RLTHSMEVQQ…MEAADDISYC (208 aa)).

This sequence belongs to the dGTPase family. Type 1 subfamily. As to quaternary structure, homotetramer. Mg(2+) serves as cofactor.

The catalysed reaction is dGTP + H2O = 2'-deoxyguanosine + triphosphate + H(+). Its function is as follows. dGTPase preferentially hydrolyzes dGTP over the other canonical NTPs. This chain is Deoxyguanosinetriphosphate triphosphohydrolase, found in Serratia proteamaculans (strain 568).